We begin with the raw amino-acid sequence, 511 residues long: Lysine--tRNA ligase 2 (511 aa).

The tract at residues 1 to 22 (MTMEINNTDPFEKMPLPDDSGL) is disordered. Mg(2+) is bound by residues Glu421 and Glu428.

The protein belongs to the class-II aminoacyl-tRNA synthetase family. Homodimer. Mg(2+) is required as a cofactor.

The protein localises to the cytoplasm. The enzyme catalyses tRNA(Lys) + L-lysine + ATP = L-lysyl-tRNA(Lys) + AMP + diphosphate. This chain is Lysine--tRNA ligase 2, found in Methanosarcina mazei (strain ATCC BAA-159 / DSM 3647 / Goe1 / Go1 / JCM 11833 / OCM 88) (Methanosarcina frisia).